Consider the following 510-residue polypeptide: ATP synthase subunit alpha, mitochondrial (510 aa).

Residue 171–178 (GDRQTGKT) coordinates ATP.

It belongs to the ATPase alpha/beta chains family. As to quaternary structure, F-type ATPases have 2 components, CF(1) - the catalytic core - and CF(0) - the membrane proton channel. CF(1) has five subunits: alpha(3), beta(3), gamma(1), delta(1), epsilon(1). CF(0) has three main subunits: a, b and c.

It is found in the mitochondrion. Its subcellular location is the mitochondrion inner membrane. Functionally, mitochondrial membrane ATP synthase (F(1)F(0) ATP synthase or Complex V) produces ATP from ADP in the presence of a proton gradient across the membrane which is generated by electron transport complexes of the respiratory chain. F-type ATPases consist of two structural domains, F(1) - containing the extramembraneous catalytic core, and F(0) - containing the membrane proton channel, linked together by a central stalk and a peripheral stalk. During catalysis, ATP synthesis in the catalytic domain of F(1) is coupled via a rotary mechanism of the central stalk subunits to proton translocation. Subunits alpha and beta form the catalytic core in F(1). Rotation of the central stalk against the surrounding alpha(3)beta(3) subunits leads to hydrolysis of ATP in three separate catalytic sites on the beta subunits. Subunit alpha does not bear the catalytic high-affinity ATP-binding sites. In Helianthus annuus (Common sunflower), this protein is ATP synthase subunit alpha, mitochondrial (ATPA).